Reading from the N-terminus, the 694-residue chain is Transcriptional activator HAA1 (694 aa).

The segment at residues 1 to 40 (MVLINGIKYACERCIRGHRVTTCNHTDQPLMMIKPKGRPS) is a DNA-binding region (copper-fist). The Zn(2+) site is built by C11, C14, C23, and H25. Disordered regions lie at residues 104-128 (QKRHLRKSPSSSQKKGRSISRSQPM) and 209-240 (FNFLTGNINETNQNHSNHQHSKSGNNWQDSSV). Positions 111-126 (SPSSSQKKGRSISRSQ) are enriched in polar residues. Phosphoserine is present on residues S125, S231, S241, and S291. Disordered stretches follow at residues 332-388 (FDIN…NGLF), 479-514 (EKERETERSPSSNYITDRPFTRKPRSSSIDVNHRYP), 566-588 (SSIHSVPQSINSPRMPKTGSRQD), and 650-677 (MISTPSGRNDLPDTSPMSSIQTASPPSQ). Positions 336 to 349 (DNCNRINSKSYSKT) are enriched in polar residues. The segment covering 350–378 (NSMNGNGMNNSNNNNINSNGNDKNNNNSS) has biased composition (low complexity). Composition is skewed to polar residues over residues 566–577 (SSIHSVPQSINS) and 664–677 (SPMSSIQTASPPSQ).

It localises to the nucleus. In terms of biological role, regulates the transcription of a set of genes, many of which encode membrane proteins. Among the genes regulated are YGR138C and YRO2. Does not seem to be dependent on copper. The chain is Transcriptional activator HAA1 (HAA1) from Saccharomyces cerevisiae (strain ATCC 204508 / S288c) (Baker's yeast).